The following is a 473-amino-acid chain: LETM1 domain-containing protein mdm28, mitochondrial (473 aa).

The transit peptide at 1–73 (MLRNRLFKTP…FYNIGSSRLY (73 aa)) directs the protein to the mitochondrion. At 74 to 161 (STETPTPSKV…LTRTLKDIGR (88 aa)) the chain is on the mitochondrial intermembrane side. A helical transmembrane segment spans residues 162–182 (LVPFSVFVVVPFAELLLPIAV). The Mitochondrial matrix segment spans residues 183–473 (KLFPNLLPST…ESNIPKNERK (291 aa)). In terms of domain architecture, Letm1 RBD spans 205–398 (QLRKTRNEVS…LQDTLASIPD (194 aa)). A disordered region spans residues 430-473 (EEEAEHVAEHPDLAKKQTEENKATSKPAVSAKSPESNIPKNERK). The span at 434 to 452 (EHVAEHPDLAKKQTEENKA) shows a compositional bias: basic and acidic residues. Residues 462–473 (SPESNIPKNERK) are compositionally biased toward polar residues.

It localises to the mitochondrion inner membrane. Its function is as follows. Involved in mitochondrial potassium homeostasis through the mitochondrial K(+)/H(+) exchange regulation. The protein is LETM1 domain-containing protein mdm28, mitochondrial (mdm28) of Schizosaccharomyces pombe (strain 972 / ATCC 24843) (Fission yeast).